The following is a 298-amino-acid chain: Inosose dehydratase (298 aa).

This sequence belongs to the IolE/MocC family. Requires glutathione as cofactor. Co(2+) serves as cofactor. It depends on Mn(2+) as a cofactor.

It carries out the reaction scyllo-inosose = 3D-3,5/4-trihydroxycyclohexane-1,2-dione + H2O. The protein operates within polyol metabolism; myo-inositol degradation into acetyl-CoA; acetyl-CoA from myo-inositol: step 2/7. Catalyzes the dehydration of inosose (2-keto-myo-inositol, 2KMI or 2,4,6/3,5-pentahydroxycyclohexanone) to 3D-(3,5/4)-trihydroxycyclohexane-1,2-dione (D-2,3-diketo-4-deoxy-epi-inositol). This Lacticaseibacillus casei (Lactobacillus casei) protein is Inosose dehydratase.